Reading from the N-terminus, the 431-residue chain is Anaerobic glycerol-3-phosphate dehydrogenase subunit B (431 aa).

The protein belongs to the anaerobic G-3-P dehydrogenase subunit B family. In terms of assembly, composed of a catalytic GlpA/B dimer and of membrane bound GlpC. FMN serves as cofactor.

It catalyses the reaction a quinone + sn-glycerol 3-phosphate = dihydroxyacetone phosphate + a quinol. It participates in polyol metabolism; glycerol degradation via glycerol kinase pathway; glycerone phosphate from sn-glycerol 3-phosphate (anaerobic route): step 1/1. Conversion of glycerol 3-phosphate to dihydroxyacetone. Uses fumarate or nitrate as electron acceptor. The polypeptide is Anaerobic glycerol-3-phosphate dehydrogenase subunit B (Mannheimia succiniciproducens (strain KCTC 0769BP / MBEL55E)).